Reading from the N-terminus, the 1346-residue chain is Pikromycin polyketide synthase component PikAIV (1346 aa).

Residues 3-32 (SSNEQLVDALRASLKENEELRKESRRRADR) adopt a coiled-coil conformation. A Ketosynthase family 3 (KS3) domain is found at 34–461 (QEPMAIVGMS…GTNAHVVLEE (428 aa)). Residues 37–1332 (MAIVGMSCRF…HAPAVAEAVL (1296 aa)) are module 6. Residues cysteine 207, histidine 342, and histidine 382 each act as for beta-ketoacyl synthase activity in the active site. The segment at 562–844 (FVFPGQGTQW…VLTMTLPDKV (283 aa)) is acyltransferase. Catalysis depends on serine 652, which acts as the Acyl-ester intermediate; for acyltransferase activity. The 76-residue stretch at 945 to 1020 (SAVLAMVMRQ…ALAERISDEL (76 aa)) folds into the Carrier domain. Serine 980 is modified (O-(pantetheine 4'-phosphoryl)serine). The segment at 1028 to 1050 (AEPSDHEQAEEEKAAAPAGARSG) is disordered. Residues 1030–1041 (PSDHEQAEEEKA) show a composition bias toward basic and acidic residues. Threonine 1125 contributes to the substrate binding site. The interval 1127 to 1332 (ANGGPHEFLR…HAPAVAEAVL (206 aa)) is thioesterase. Serine 1196 serves as the catalytic Nucleophile; for thioesterase activity. Substrate is bound by residues glycine 1197 and aspartate 1224. Histidine 1316 functions as the Proton acceptor; for thioesterase activity in the catalytic mechanism.

As to quaternary structure, homodimer. Pikromycin PKS consists of a combination of multimodular (PikAI and PikAII) and monomodular (PikAIII and PikAIV) polypeptides each coding for a functional synthase subunit which participates in 1 (monomodular) or 2 (multimodular) of the six FAS-like elongation steps required for formation of the polyketide. Module 1, 2, 3, 4, 5, and 6 participating in biosynthesis steps 1, 2, 3, 4, 5, and 6, respectively. Requires pantetheine 4'-phosphate as cofactor.

It catalyses the reaction 5 (S)-methylmalonyl-CoA + malonyl-CoA + 5 NADPH + 11 H(+) = 10-deoxymethynolide + 6 CO2 + 5 NADP(+) + 6 CoA + 2 H2O. It carries out the reaction 6 (S)-methylmalonyl-CoA + malonyl-CoA + 5 NADPH + 12 H(+) = narbonolide + 7 CO2 + 5 NADP(+) + 7 CoA + 2 H2O. The protein operates within antibiotic biosynthesis. Its activity is regulated as follows. Irreversibly inhibited by (2S,3R,4S)-2,4-dihydroxy-3-methylhexyl-phosphonic acid and (3R,4S)-4-hydroxy-3-methyl-2-oxohexyl-phosphonic acid. Its function is as follows. Involved in the biosynthesis of 12- and 14-membered ring macrolactone antibiotics such as methymycin and neomethymycin, and pikromycin and narbomycin, respectively. Component of the pikromycin PKS which catalyzes the biosynthesis of both precursors 10-deoxymethynolide (12-membered ring macrolactone) and narbonolide (14-membered ring macrolactone). Chain elongation through PikAI, PikAII and PikAIII followed by thioesterase catalyzed termination results in the production of 10-deoxymethynolide, while continued elongation through PikAIV, followed by thioesterase (TE) catalyzed cyclization results in the biosynthesis of the narbonolide. The thioesterase can use a series of diketide-N-acetylcysteamine (SNAC) thioesters, but has a strong preference for the 2-methyl-3-ketopentanoyl-SNAC over the stereoisomers of 2-methyl-3-hydroxyacyl-SNAC. This Streptomyces venezuelae protein is Pikromycin polyketide synthase component PikAIV.